The following is a 615-amino-acid chain: Protease 4 (615 aa).

Residues 1–17 (MFQVLKFCWKVLCFIRD) lie on the Cytoplasmic side of the membrane. The chain crosses the membrane as a helical span at residues 18–38 (LVMNVVFLGFVLLLVAIISFS). The Periplasmic portion of the chain corresponds to 39-615 (SGGKKSTALT…LYCLNCGKVK (577 aa)). Lysine 201 acts as the Proton donor/acceptor in catalysis. Serine 405 (nucleophile) is an active-site residue.

It belongs to the peptidase S49 family. Homotetramer.

It localises to the cell inner membrane. In terms of biological role, digests cleaved signal peptides in vitro, its in vivo function is unknown. This activity is necessary to maintain proper secretion of mature proteins across the membrane. The polypeptide is Protease 4 (sppA) (Haemophilus influenzae (strain ATCC 51907 / DSM 11121 / KW20 / Rd)).